The sequence spans 388 residues: Succinyl-diaminopimelate desuccinylase (388 aa).

H84 contributes to the Zn(2+) binding site. The active site involves D86. D115 is a Zn(2+) binding site. E146 acts as the Proton acceptor in catalysis. Residues E147, E175, and H360 each contribute to the Zn(2+) site.

The protein belongs to the peptidase M20A family. DapE subfamily. In terms of assembly, homodimer. It depends on Zn(2+) as a cofactor. Requires Co(2+) as cofactor.

The catalysed reaction is N-succinyl-(2S,6S)-2,6-diaminopimelate + H2O = (2S,6S)-2,6-diaminopimelate + succinate. Its pathway is amino-acid biosynthesis; L-lysine biosynthesis via DAP pathway; LL-2,6-diaminopimelate from (S)-tetrahydrodipicolinate (succinylase route): step 3/3. In terms of biological role, catalyzes the hydrolysis of N-succinyl-L,L-diaminopimelic acid (SDAP), forming succinate and LL-2,6-diaminopimelate (DAP), an intermediate involved in the bacterial biosynthesis of lysine and meso-diaminopimelic acid, an essential component of bacterial cell walls. The chain is Succinyl-diaminopimelate desuccinylase from Helicobacter pylori (strain J99 / ATCC 700824) (Campylobacter pylori J99).